The primary structure comprises 559 residues: Tryprostatin B 6-hydroxylase (559 aa).

Transmembrane regions (helical) follow at residues P13–Y35, Y48–A65, and V82–F104. A heme-binding site is contributed by C502.

This sequence belongs to the cytochrome P450 family. Heme is required as a cofactor.

It is found in the membrane. It carries out the reaction tryprostatin B + reduced [NADPH--hemoprotein reductase] + O2 = 6-hydroxytryprostatin B + oxidized [NADPH--hemoprotein reductase] + H2O + H(+). It participates in mycotoxin biosynthesis. Cytochrome P450 monooxygenase; part of the gene cluster that mediates the biosynthesis of fumitremorgins, indole alkaloids that carry not only intriguing chemical structures, but also interesting biological and pharmacological activities. The biosynthesis of fumitremorgin-type alkaloids begins by condensation of the two amino acids L-tryptophan and L-proline to brevianamide F, catalyzed by the non-ribosomal peptide synthetase ftmA. Brevianamide F is then prenylated by the prenyltransferase ftmPT1/ftmB in the presence of dimethylallyl diphosphate, resulting in the formation of tryprostatin B. The three cytochrome P450 monooxygenases, ftmP450-1/ftmC, ftmP450-2/ftmE and ftmP450-3/FtmG, are responsible for the conversion of tryprostatin B to 6-hydroxytryprostatin B, tryprostatin A to fumitremorgin C and fumitremorgin C to 12,13-dihydroxyfumitremorgin C, respectively. The putative methyltransferase ftmMT/ftmD is expected for the conversion of 6-hydroxytryprostatin B to tryprostatin A. FtmPT2/FtmH catalyzes the prenylation of 12,13-dihydroxyfumitre-morgin C in the presence of dimethylallyl diphosphate, resulting in the formation of fumitremorgin B. Fumitremorgin B is further converted to verruculogen by ftmOx1/ftmF via the insertion of an endoperoxide bond between the two prenyl moieties. In some fungal species, verruculogen is further converted to fumitremorgin A, but the enzymes involved in this step have not been identified yet. The chain is Tryprostatin B 6-hydroxylase from Aspergillus fumigatus (Neosartorya fumigata).